The primary structure comprises 123 residues: Protein Wnt-7a (123 aa).

Residue serine 1 is the site of O-palmitoleoyl serine; by PORCN attachment. The interval 33–61 is disordered linker; that stretch reads VEPVRASRNKRPTFLKIKKPLSYRKPMDT. Cysteine 89 and cysteine 104 are oxidised to a cystine. Asparagine 90 carries N-linked (GlcNAc...) asparagine glycosylation.

The protein belongs to the Wnt family. Forms a soluble 1:1 complex with AFM; this prevents oligomerization and is required for prolonged biological activity. The complex with AFM may represent the physiological form in body fluids. Interacts with FZD5. Interacts with PORCN. In terms of processing, palmitoleoylation is required for efficient binding to frizzled receptors. Depalmitoleoylation leads to Wnt signaling pathway inhibition.

The protein localises to the secreted. Its subcellular location is the extracellular space. It localises to the extracellular matrix. In terms of biological role, ligand for members of the frizzled family of seven transmembrane receptors that functions in the canonical Wnt/beta-catenin signaling pathway. Plays an important role in embryonic development, including dorsal versus ventral patterning during limb development, skeleton development and urogenital tract development. Required for central nervous system (CNS) angiogenesis and blood-brain barrier regulation. In Meleagris gallopavo (Wild turkey), this protein is Protein Wnt-7a (WNT7A).